A 270-amino-acid chain; its full sequence is dTDP-6-deoxy-L-talose 4-dehydrogenase (NAD(+)) (270 aa).

Residues 11–12, 50–51, 72–76, N87, T112, Y135, and K139 contribute to the NAD(+) site; these read YI, DI, and LAWQA. Substrate-binding residues include T112 and Y135. The active-site Proton acceptor is Y135.

It belongs to the NAD(P)-dependent epimerase/dehydratase family.

The enzyme catalyses dTDP-6-deoxy-beta-L-talose + NAD(+) = dTDP-4-dehydro-beta-L-rhamnose + NADH + H(+). It functions in the pathway bacterial outer membrane biogenesis; LPS O-antigen biosynthesis. Functionally, catalyzes the reduction of dTDP-6-deoxy-L-lyxo-4-hexulose to dTDP-6-deoxy-L-talose. The protein is dTDP-6-deoxy-L-talose 4-dehydrogenase (NAD(+)) (tll) of Aggregatibacter actinomycetemcomitans (Actinobacillus actinomycetemcomitans).